The sequence spans 733 residues: 1,4-alpha-glucan branching enzyme GlgB (733 aa).

Asp-413 serves as the catalytic Nucleophile. The Proton donor role is filled by Glu-466.

This sequence belongs to the glycosyl hydrolase 13 family. GlgB subfamily. As to quaternary structure, monomer.

The enzyme catalyses Transfers a segment of a (1-&gt;4)-alpha-D-glucan chain to a primary hydroxy group in a similar glucan chain.. It functions in the pathway glycan biosynthesis; glycogen biosynthesis. Its function is as follows. Catalyzes the formation of the alpha-1,6-glucosidic linkages in glycogen by scission of a 1,4-alpha-linked oligosaccharide from growing alpha-1,4-glucan chains and the subsequent attachment of the oligosaccharide to the alpha-1,6 position. The polypeptide is 1,4-alpha-glucan branching enzyme GlgB (Leifsonia xyli subsp. xyli (strain CTCB07)).